Reading from the N-terminus, the 277-residue chain is Radial spoke head protein 9 homolog (277 aa).

It belongs to the flagellar radial spoke RSP9 family. In terms of assembly, component of axonemal radial spoke complexes.

It is found in the cytoplasm. The protein resides in the cytoskeleton. Its subcellular location is the cilium axoneme. It localises to the flagellum axoneme. The protein localises to the cell projection. It is found in the kinocilium. Functionally, functions as part of axonemal radial spoke complexes that play an important part in the motility of sperm and cilia. Required for motility of olfactory and neural cilia and for the structural integrity of ciliary axonemes in both 9+0 and 9+2 motile cilia. Essential for both the radial spoke head assembly and the central pair microtubule stability in ependymal motile cilia. This is Radial spoke head protein 9 homolog (rsph9) from Danio rerio (Zebrafish).